Consider the following 218-residue polypeptide: Deoxyribose-phosphate aldolase (218 aa).

The Proton donor/acceptor role is filled by Asp-89. The Schiff-base intermediate with acetaldehyde role is filled by Lys-152. The Proton donor/acceptor role is filled by Lys-182.

This sequence belongs to the DeoC/FbaB aldolase family. DeoC type 1 subfamily.

It localises to the cytoplasm. It carries out the reaction 2-deoxy-D-ribose 5-phosphate = D-glyceraldehyde 3-phosphate + acetaldehyde. The protein operates within carbohydrate degradation; 2-deoxy-D-ribose 1-phosphate degradation; D-glyceraldehyde 3-phosphate and acetaldehyde from 2-deoxy-alpha-D-ribose 1-phosphate: step 2/2. Functionally, catalyzes a reversible aldol reaction between acetaldehyde and D-glyceraldehyde 3-phosphate to generate 2-deoxy-D-ribose 5-phosphate. This chain is Deoxyribose-phosphate aldolase, found in Kocuria rhizophila (strain ATCC 9341 / DSM 348 / NBRC 103217 / DC2201).